Consider the following 234-residue polypeptide: MFVMRCDFVSIFPEYFDVLDISLIGKARRNGLLDLRVHNLREYSEAGRVDSSPYGGGPGMVMSAEPWARAIEHIATGESLVVFPSPSGQPYSHDLAQSLSSEMHIVFCCGRYEGIDNRIYEWTATRLRSSGISIGDYVLNGGEIAALVILEGFVRFIPGVLGNPESLVEESYQYNLLEYPVYTKPAVWRGLEVPDILLSGNHDLIREWRYKKQLEITQKTRPDLYSTHIYETDS.

S-adenosyl-L-methionine-binding positions include G110 and 134–139; that span reads IGDYVL.

The protein belongs to the RNA methyltransferase TrmD family. Homodimer.

The protein localises to the cytoplasm. The catalysed reaction is guanosine(37) in tRNA + S-adenosyl-L-methionine = N(1)-methylguanosine(37) in tRNA + S-adenosyl-L-homocysteine + H(+). In terms of biological role, specifically methylates guanosine-37 in various tRNAs. This chain is tRNA (guanine-N(1)-)-methyltransferase, found in Tropheryma whipplei (strain TW08/27) (Whipple's bacillus).